The sequence spans 778 residues: Lon protease (778 aa).

A Lon N-terminal domain is found at L6–I207. ATP is bound at residue G356–T363. A Lon proteolytic domain is found at E592–E773. Active-site residues include S679 and K722.

This sequence belongs to the peptidase S16 family. As to quaternary structure, homohexamer. Organized in a ring with a central cavity.

The protein localises to the cytoplasm. The enzyme catalyses Hydrolysis of proteins in presence of ATP.. ATP-dependent serine protease that mediates the selective degradation of mutant and abnormal proteins as well as certain short-lived regulatory proteins. Required for cellular homeostasis and for survival from DNA damage and developmental changes induced by stress. Degrades polypeptides processively to yield small peptide fragments that are 5 to 10 amino acids long. Binds to DNA in a double-stranded, site-specific manner. This is Lon protease from Rickettsia felis (strain ATCC VR-1525 / URRWXCal2) (Rickettsia azadi).